The primary structure comprises 158 residues: NAD(P)H-quinone oxidoreductase subunit J, chloroplastic (158 aa).

Belongs to the complex I 30 kDa subunit family. As to quaternary structure, NDH is composed of at least 16 different subunits, 5 of which are encoded in the nucleus.

The protein localises to the plastid. It localises to the chloroplast thylakoid membrane. It carries out the reaction a plastoquinone + NADH + (n+1) H(+)(in) = a plastoquinol + NAD(+) + n H(+)(out). The catalysed reaction is a plastoquinone + NADPH + (n+1) H(+)(in) = a plastoquinol + NADP(+) + n H(+)(out). Functionally, NDH shuttles electrons from NAD(P)H:plastoquinone, via FMN and iron-sulfur (Fe-S) centers, to quinones in the photosynthetic chain and possibly in a chloroplast respiratory chain. The immediate electron acceptor for the enzyme in this species is believed to be plastoquinone. Couples the redox reaction to proton translocation, and thus conserves the redox energy in a proton gradient. This Nicotiana tabacum (Common tobacco) protein is NAD(P)H-quinone oxidoreductase subunit J, chloroplastic.